Consider the following 210-residue polypeptide: Ribonuclease HII (210 aa).

Positions 17–206 (DIICGVDEAG…VRALLGGVTP (190 aa)) constitute an RNase H type-2 domain. Aspartate 23, glutamate 24, and aspartate 115 together coordinate a divalent metal cation.

The protein belongs to the RNase HII family. Requires Mn(2+) as cofactor. The cofactor is Mg(2+).

It is found in the cytoplasm. It carries out the reaction Endonucleolytic cleavage to 5'-phosphomonoester.. Functionally, endonuclease that specifically degrades the RNA of RNA-DNA hybrids. This Janthinobacterium sp. (strain Marseille) (Minibacterium massiliensis) protein is Ribonuclease HII.